We begin with the raw amino-acid sequence, 123 residues long: DNA-directed RNA polymerase I subunit RPA12 (123 aa).

6 residues coordinate Zn(2+): Cys17, Cys20, Cys35, Cys38, Cys84, and Cys87. The segment at 17 to 38 adopts a C4-type zinc-finger fold; it reads CPDCGSVLPLPGVQDTVICPRC. A TFIIS-type zinc finger spans residues 80-120; it reads VDRRCSRCGHEGMAYYTRQMRSADEGQTVFYTCINCKFQEK. A Hairpin motif is present at residues 103 to 104; it reads DE. Zn(2+)-binding residues include Cys112 and Cys115.

Belongs to the archaeal RpoM/eukaryotic RPA12/RPB9/RPC11 RNA polymerase family. In terms of assembly, component of the RNA polymerase I (Pol I) complex consisting of 13 subunits: a ten-subunit catalytic core composed of POLR1A/RPA1, POLR1B/RPA2, POLR1C/RPAC1, POLR1D/RPAC2, POLR1H/RPA12, POLR2E/RPABC1, POLR2F/RPABC2, POLR2H/RPABC3, POLR2K/RPABC4 and POLR2L/RPABC5; a mobile stalk subunit POLR1F/RPA43 protruding from the core and additional subunits homologous to general transcription factors POLR1E/RPA49 and POLR1G/RPA34. Part of Pol I pre-initiation complex (PIC), in which Pol I core assembles with RRN3 and promoter-bound UTBF and SL1/TIF-IB complex.

It localises to the nucleus. It is found in the nucleolus. In terms of biological role, core component of RNA polymerase I (Pol I), a DNA-dependent RNA polymerase which synthesizes ribosomal RNA precursors using the four ribonucleoside triphosphates as substrates. Can mediate Pol I proofreading of the nascent RNA transcript. Anchors into the Pol I active site to monitor transcription fidelity and cleave mis-incorporated 5'-ribonucleotides. The protein is DNA-directed RNA polymerase I subunit RPA12 of Rattus norvegicus (Rat).